A 965-amino-acid chain; its full sequence is Glycine dehydrogenase (decarboxylating) (965 aa).

Residue Lys-711 is modified to N6-(pyridoxal phosphate)lysine.

This sequence belongs to the GcvP family. The glycine cleavage system is composed of four proteins: P, T, L and H. Pyridoxal 5'-phosphate serves as cofactor.

The enzyme catalyses N(6)-[(R)-lipoyl]-L-lysyl-[glycine-cleavage complex H protein] + glycine + H(+) = N(6)-[(R)-S(8)-aminomethyldihydrolipoyl]-L-lysyl-[glycine-cleavage complex H protein] + CO2. Functionally, the glycine cleavage system catalyzes the degradation of glycine. The P protein binds the alpha-amino group of glycine through its pyridoxal phosphate cofactor; CO(2) is released and the remaining methylamine moiety is then transferred to the lipoamide cofactor of the H protein. This is Glycine dehydrogenase (decarboxylating) from Psychrobacter cryohalolentis (strain ATCC BAA-1226 / DSM 17306 / VKM B-2378 / K5).